Here is a 140-residue protein sequence, read N- to C-terminus: Endoribonuclease YbeY (140 aa).

Residues His-99, His-103, and His-109 each contribute to the Zn(2+) site.

The protein belongs to the endoribonuclease YbeY family. Zn(2+) serves as cofactor.

It localises to the cytoplasm. In terms of biological role, single strand-specific metallo-endoribonuclease involved in late-stage 70S ribosome quality control and in maturation of the 3' terminus of the 16S rRNA. In Wolinella succinogenes (strain ATCC 29543 / DSM 1740 / CCUG 13145 / JCM 31913 / LMG 7466 / NCTC 11488 / FDC 602W) (Vibrio succinogenes), this protein is Endoribonuclease YbeY.